A 391-amino-acid chain; its full sequence is uncharacterized protein (391 aa).

Residues Ser118–Pro149 are compositionally biased toward low complexity. Disordered regions lie at residues Ser118–Pro162, Gln184–Asn258, Asn272–Asn327, and Leu337–Asn356. Residues Gln150–Pro162 are compositionally biased toward basic residues. Residues Asn186–Asn211 show a composition bias toward low complexity. Residues Asp212 to Thr223 are compositionally biased toward polar residues. Residues Asn244–Pro256 show a composition bias toward low complexity.

This is an uncharacterized protein from Dictyostelium discoideum (Social amoeba).